A 468-amino-acid chain; its full sequence is Alpha-2A adrenergic receptor (468 aa).

The Extracellular portion of the chain corresponds to 1–48; that stretch reads MFRQEQPLAEGSFAPMGSLQPDAGNASWNGTEAPGGGARATPYSLQVT. N-linked (GlcNAc...) asparagine glycans are attached at residues Asn25 and Asn29. Residues 49–74 traverse the membrane as a helical segment; it reads LTLVCLAGLLMLFTVFGNVLVIIAVF. At 75 to 85 the chain is on the cytoplasmic side; the sequence is TSRALKAPQNL. Residues 86–111 traverse the membrane as a helical segment; it reads FLVSLASADILVATLVIPFSLANEVM. The Extracellular segment spans residues 112 to 121; the sequence is GYWYFGKAWC. Cysteines 121 and 203 form a disulfide. Residues 122–144 traverse the membrane as a helical segment; that stretch reads EIYLALDVLFCTSSIVHLCAISL. The Cytoplasmic portion of the chain corresponds to 145–164; the sequence is DRYWSITQAIEYNLKRTPRR. Residues 165 to 188 form a helical membrane-spanning segment; sequence IKAIIVTVWVISAVISFPPLISFE. The Extracellular portion of the chain corresponds to 189–207; sequence KKRGRSGQPSAEPRCEIND. A helical membrane pass occupies residues 208–232; sequence QKWYVISSSIGSFFAPCLIMILVYV. At 233–392 the chain is on the cytoplasmic side; sequence RIYQIAKRRT…RQNREKRFTF (160 aa). Disordered stretches follow at residues 242 to 279 and 291 to 381; these read TRVP…VGPV and NGAP…SRWR. The span at 315-332 shows a compositional bias: basic and acidic residues; the sequence is SSEHAERPPGSRRSERGP. Ser348 carries the post-translational modification Phosphoserine. Over residues 351-366 the composition is skewed to low complexity; that stretch reads RRGPGATGLGAPTAGP. An Omega-N-methylarginine modification is found at Arg370. Residues 393-417 traverse the membrane as a helical segment; it reads VLAVVIGVFVVCWFPFFFTYTLTAI. At 418–427 the chain is on the extracellular side; the sequence is GCPVPPTLFK. The chain crosses the membrane as a helical span at residues 428–448; that stretch reads FFFWFGYCNSSLNPVIYTIFN. The Cytoplasmic segment spans residues 449–468; it reads HDFRRAFKKILCRGDRKRIV. The S-palmitoyl cysteine moiety is linked to residue Cys460.

It belongs to the G-protein coupled receptor 1 family. Adrenergic receptor subfamily. ADRA2A sub-subfamily. As to quaternary structure, component of the ADA2A-containing complex (ATAC), composed of KAT14, KAT2A, TADA2L, TADA3L, ZZ3, MBIP, WDR5, YEATS2, CCDC101 and DR1. As to expression, retina, brain and olfactory lobe.

It localises to the cell membrane. In terms of biological role, alpha-2 adrenergic receptors mediate the catecholamine-induced inhibition of adenylate cyclase through the action of G proteins. Component of the ATAC complex, a complex with histone acetyltransferase activity on histones H3 and H4. This is Alpha-2A adrenergic receptor from Bos taurus (Bovine).